The following is a 213-amino-acid chain: Adenylate kinase (213 aa).

10–15 (GCGKGT) contributes to the ATP binding site. An NMP region spans residues 30–59 (STGDLMRKEISLNTRLGLKCQEYMNAGKYV). AMP-binding positions include threonine 31, arginine 36, 57-59 (KYV), 83-86 (GYPR), and glutamine 90. Positions 124–161 (NRLVCPLCKASFNLETRKPKQEGLCDFDNTKLVKRSDD) are LID. An ATP-binding site is contributed by arginine 125. The Zn(2+) site is built by cysteine 128 and cysteine 131. 134-135 (SF) contacts ATP. The Zn(2+) site is built by cysteine 148 and aspartate 151. Residues arginine 158 and arginine 169 each contribute to the AMP site. Aspartate 197 lines the ATP pocket.

This sequence belongs to the adenylate kinase family. In terms of assembly, monomer.

The protein localises to the cytoplasm. It catalyses the reaction AMP + ATP = 2 ADP. The protein operates within purine metabolism; AMP biosynthesis via salvage pathway; AMP from ADP: step 1/1. Its function is as follows. Catalyzes the reversible transfer of the terminal phosphate group between ATP and AMP. Plays an important role in cellular energy homeostasis and in adenine nucleotide metabolism. The protein is Adenylate kinase of Mycoplasma mycoides subsp. mycoides SC (strain CCUG 32753 / NCTC 10114 / PG1).